The following is a 911-amino-acid chain: Protein transport protein SEC24-1 (911 aa).

Residues 108 to 123 show a composition bias toward low complexity; the sequence is QPLPQQQQQQQQQQGP. Residues 108–130 are disordered; it reads QPLPQQQQQQQQQQGPAKPPKPM. Cys-226, Cys-229, Cys-248, and Cys-251 together coordinate Zn(2+). The zinc finger-like stretch occupies residues 226-251; it reads CRRCRSYMNPFVHFNQDGRRWKCNIC.

The protein belongs to the SEC23/SEC24 family. SEC24 subfamily. In terms of assembly, the COPII coat is composed of at least 5 proteins: the SEC23/24 complex, the SEC13/31 complex, and the protein SAR1. Golgi apparatus membrane; Peripheral membrane protein; Cytoplasmic side.

It localises to the cytoplasm. Its subcellular location is the cytoplasmic vesicle. The protein resides in the COPII-coated vesicle membrane. The protein localises to the endoplasmic reticulum membrane. It is found in the golgi apparatus membrane. In terms of biological role, component of the coat protein complex II (COPII) which promotes the formation of transport vesicles from the endoplasmic reticulum (ER). The coat has two main functions, the physical deformation of the endoplasmic reticulum membrane into vesicles and the selection of cargo molecules. The chain is Protein transport protein SEC24-1 (SEC241) from Naumovozyma castellii (Yeast).